The following is a 333-amino-acid chain: S-adenosylmethionine decarboxylase proenzyme (333 aa).

Substrate is bound at residue Phe7. Active-site residues include Glu8 and Glu11. Substrate is bound at residue Glu67. Catalysis depends on Ser68, which acts as the Schiff-base intermediate with substrate; via pyruvic acid. Ser68 is subject to Pyruvic acid (Ser); by autocatalysis. Cys82 serves as the catalytic Proton donor; for catalytic activity. A substrate-binding site is contributed by Phe223. Active-site proton acceptor; for processing activity residues include Ser229 and His243. A substrate-binding site is contributed by Glu247. Ser298 carries the phosphoserine modification.

The protein belongs to the eukaryotic AdoMetDC family. Heterotetramer of two alpha and two beta chains. Pyruvate serves as cofactor. Is synthesized initially as an inactive proenzyme. Formation of the active enzyme involves a self-maturation process in which the active site pyruvoyl group is generated from an internal serine residue via an autocatalytic post-translational modification. Two non-identical subunits are generated from the proenzyme in this reaction, and the pyruvate is formed at the N-terminus of the alpha chain, which is derived from the carboxyl end of the proenzyme. The post-translation cleavage follows an unusual pathway, termed non-hydrolytic serinolysis, in which the side chain hydroxyl group of the serine supplies its oxygen atom to form the C-terminus of the beta chain, while the remainder of the serine residue undergoes an oxidative deamination to produce ammonia and the pyruvoyl group blocking the N-terminus of the alpha chain.

It catalyses the reaction S-adenosyl-L-methionine + H(+) = S-adenosyl 3-(methylsulfanyl)propylamine + CO2. It participates in amine and polyamine biosynthesis; S-adenosylmethioninamine biosynthesis; S-adenosylmethioninamine from S-adenosyl-L-methionine: step 1/1. In terms of biological role, essential for biosynthesis of the polyamines spermidine and spermine. Promotes maintenance and self-renewal of embryonic stem cells, by maintaining spermine levels. This chain is S-adenosylmethionine decarboxylase proenzyme (Amd1), found in Rattus norvegicus (Rat).